We begin with the raw amino-acid sequence, 299 residues long: Recombination-associated protein RdgC (299 aa).

The protein belongs to the RdgC family.

Its subcellular location is the cytoplasm. The protein resides in the nucleoid. Functionally, may be involved in recombination. The polypeptide is Recombination-associated protein RdgC (Bordetella bronchiseptica (strain ATCC BAA-588 / NCTC 13252 / RB50) (Alcaligenes bronchisepticus)).